Here is a 604-residue protein sequence, read N- to C-terminus: Baculoviral IAP repeat-containing protein 3 (604 aa).

One copy of the BIR 1 repeat lies at 29–96 (ELYRMSTYST…RNLYPSCSFI (68 aa)). Arg130 bears the Omega-N-methylarginine mark. Ser140 is modified (phosphoserine). 2 BIR repeats span residues 169–235 (EEDR…CPFV) and 255–322 (LAAR…CEYL). Zn(2+)-binding residues include Cys292, Cys295, His312, and Cys319. Residues 439-529 (RESDDVSLIR…MLYKRFFVQQ (91 aa)) form the CARD domain. The segment at 557–592 (CKVCMDKEVSIVFIPCGHLVVCRDCAPSLRKCPICR) adopts an RING-type zinc-finger fold.

This sequence belongs to the IAP family. In terms of assembly, interacts with PRSS25; the interaction inhibits apoptotic suppressor activity. The BIR motifs region interacts with TNF receptor associated factors 1 and 2 (TRAF1 and TRAF2) to form a heteromeric complex, which is then recruited to the tumor necrosis factor receptor 2 (TNFR2). Interaction with TRAF2 is required for ubiquitination of IKBKE, degradation of NFKBIA and activation of NF-kappa-B. Interacts with RIP1, RIP2, RIP3, RIP4 and USP19. In terms of processing, auto-ubiquitinated and degraded by the proteasome in apoptotic cells.

Its subcellular location is the cytoplasm. The protein resides in the nucleus. It catalyses the reaction S-ubiquitinyl-[E2 ubiquitin-conjugating enzyme]-L-cysteine + [acceptor protein]-L-lysine = [E2 ubiquitin-conjugating enzyme]-L-cysteine + N(6)-ubiquitinyl-[acceptor protein]-L-lysine.. With respect to regulation, USP19 regulates the stability of BIRC3/c-IAP2 by preventing its ubiquitination. Multi-functional protein which regulates not only caspases and apoptosis, but also modulates inflammatory signaling and immunity, mitogenic kinase signaling and cell proliferation, as well as cell invasion and metastasis. Acts as an E3 ubiquitin-protein ligase regulating NF-kappa-B signaling and regulates both canonical and non-canonical NF-kappa-B signaling by acting in opposite directions: acts as a positive regulator of the canonical pathway and suppresses constitutive activation of non-canonical NF-kappa-B signaling. The target proteins for its E3 ubiquitin-protein ligase activity include: RIPK1, RIPK2, RIPK3, RIPK4, CASP3, CASP7, CASP8, IKBKE, TRAF1, and BCL10. Acts as an important regulator of innate immune signaling via regulation of Toll-like receptors (TLRs), Nodlike receptors (NLRs) and RIG-I like receptors (RLRs), collectively referred to as pattern recognition receptors (PRRs). Protects cells from spontaneous formation of the ripoptosome, a large multi-protein complex that has the capability to kill cancer cells in a caspase-dependent and caspase-independent manner. Suppresses ripoptosome formation by ubiquitinating RIPK1 and CASP8. This chain is Baculoviral IAP repeat-containing protein 3 (BIRC3), found in Canis lupus familiaris (Dog).